Here is an 801-residue protein sequence, read N- to C-terminus: MNSSSWSAPDHSHHPALHTAADDDFHQYLDINDMGDLSDALDFDFRDFGADHHTAPHAGRHAADHLLHPSGGEHLDTPMTGTDMSMILSPVDHAMLRHGVQQQQHHQQQQHQQHQMPTITTTAPYQNAPTALIQPSTPSEAIVNTIDAQIQFLQQQKLHAQHQQLQEQQAAFFASQQNHIVPPTPQSLELTAGSSQNYYAQSTLSDQHHSGPQKQQQPQQAIDYRYTRIKDQHDMSFTPLVSPAVTPLETHFPIDTPFAVPGAYFSPLTSPALHAQNDALGIIDQRLGMMSGSSPREMELEPPAMSQASVSPGDLARKTRKNAVKARAKSGSGIKQSPISKPIRRKTATTPMLNPQALNQLVENAAPSQERQQPLTPLIPTSSSSTAGVTDSENGSISPENLNDVVLPVEMPPPPLPKPRSAKPSPFLAPQASGSAVPINLQPGRPGIASPATPASLMKLSSPSNRNPSVVGTGSHDPMDPDHIENFELPDSINFSSAPKPAPIITTLGTPALDPLQKAAAPLQTPGLPPPPSPAVAKPLALPSAALSSPQLKPDSAHSLKRTPQLAPMGRSSKKRASVTSIQMSPALRPKISPSIKPLLPGGSAGAEDAASILLATKSNYQRILEGNTVPGVSYPSELSTNLTSKRTSHKIAEQGRRNRINSALQEIATLLPKAPAKEGGDGDGDGHSSSGGGGGSGGADREDKREKDKDKAGGGIPNSKASTVEMAIEYIKQLQKEVADANKRAEEAERKLVEMKMQGGAATGSGSSVGDAGDLGTPTTEANPVVDEDLKSGGGDAMDE.

Disordered regions lie at residues 292–317 (GSSP…DLAR), 366–607 (APSQ…SAGA), 628–725 (NTVP…ASTV), and 756–801 (MKMQ…AMDE). Over residues 374–386 (PLTPLIPTSSSST) the composition is skewed to low complexity. 2 stretches are compositionally biased toward polar residues: residues 387 to 401 (AGVT…SPEN) and 459 to 472 (KLSS…SVVG). The tract at residues 446-540 (PGIASPATPA…PPSPAVAKPL (95 aa)) is interaction with negative regulatory factor. Residues 477 to 486 (DPMDPDHIEN) show a composition bias toward basic and acidic residues. Over residues 535–554 (AVAKPLALPSAALSSPQLKP) the composition is skewed to low complexity. Residues 637-646 (SELSTNLTSK) show a composition bias toward polar residues. The region spanning 645–735 (SKRTSHKIAE…EMAIEYIKQL (91 aa)) is the bHLH domain. Basic and acidic residues predominate over residues 676–687 (PAKEGGDGDGDG). Positions 690–699 (SSGGGGGSGG) are enriched in gly residues. Residues 700–713 (ADREDKREKDKDKA) are compositionally biased toward basic and acidic residues. Residues 765 to 777 (GSGSSVGDAGDLG) are compositionally biased toward low complexity.

Binds DNA as a dimer.

It localises to the nucleus. In terms of biological role, factor that activates the transcription of structural genes for phosphorus acquisition. The sequence is that of Phosphorus acquisition-controlling protein (nuc-1) from Neurospora crassa (strain ATCC 24698 / 74-OR23-1A / CBS 708.71 / DSM 1257 / FGSC 987).